The following is a 172-amino-acid chain: uncharacterized protein (172 aa).

Positions 147-159 (AGSGSGSGSGSGS) are enriched in gly residues. Residues 147–172 (AGSGSGSGSGSGSDTGPFKKSQYKIL) form a disordered region.

This is an uncharacterized protein from Homo sapiens (Human).